The chain runs to 108 residues: UPF0145 protein sll118 (108 aa).

This sequence belongs to the UPF0145 family.

The protein is UPF0145 protein sll118 of Synechocystis sp. (strain ATCC 27184 / PCC 6803 / Kazusa).